A 953-amino-acid polypeptide reads, in one-letter code: Translation initiation factor IF-2 (953 aa).

Residues 55 to 340 (GVTTEAPAAS…KSKRQKRNEY (286 aa)) are disordered. Positions 81–93 (KPAATPQQAAKPA) are enriched in low complexity. Residues 110–119 (PKPAAKPVPK) show a composition bias toward pro residues. Low complexity-rich tracts occupy residues 123–133 (SAAKAESSAPK) and 143–160 (KPAA…MPRP). Residues 202 to 219 (PGGGPRPGGNRPQGGQGG) show a composition bias toward gly residues. A compositionally biased stretch (low complexity) spans 233–248 (QPRPQGGSRSQQSGGQ). The segment covering 280 to 323 (NGRGGAGGQGGRPGFGGGRPGGGGSAGGRGGRRGGTAGAFGRPG) has biased composition (gly residues). Over residues 327–336 (RKGRKSKRQK) the composition is skewed to basic residues. A tr-type G domain is found at 449–621 (KRPPVVTVMG…VLLTADASLD (173 aa)). Residues 458–465 (GHVDHGKT) form a G1 region. A GTP-binding site is contributed by 458 to 465 (GHVDHGKT). The segment at 483-487 (GITQG) is G2. Residues 508 to 511 (DTPG) form a G3 region. Residues 508–512 (DTPGH) and 562–565 (NKID) each bind GTP. Positions 562–565 (NKID) are G4. The tract at residues 598–600 (SAK) is G5.

The protein belongs to the TRAFAC class translation factor GTPase superfamily. Classic translation factor GTPase family. IF-2 subfamily.

Its subcellular location is the cytoplasm. In terms of biological role, one of the essential components for the initiation of protein synthesis. Protects formylmethionyl-tRNA from spontaneous hydrolysis and promotes its binding to the 30S ribosomal subunits. Also involved in the hydrolysis of GTP during the formation of the 70S ribosomal complex. This Corynebacterium diphtheriae (strain ATCC 700971 / NCTC 13129 / Biotype gravis) protein is Translation initiation factor IF-2.